The chain runs to 373 residues: Aromatic amino acid aminotransferase (373 aa).

Lys-212 is modified (N6-(pyridoxal phosphate)lysine).

It belongs to the class-II pyridoxal-phosphate-dependent aminotransferase family. As to quaternary structure, homodimer. Pyridoxal 5'-phosphate is required as a cofactor.

It catalyses the reaction an aromatic L-alpha-amino acid + 2-oxoglutarate = an aromatic oxo-acid + L-glutamate. Aminotransferase that catalyzes the conversion of aromatic amino acids and 2-oxoglutarate into corresponding aromatic oxo acids and L-glutamate. This is Aromatic amino acid aminotransferase from Corynebacterium jeikeium (strain K411).